Reading from the N-terminus, the 257-residue chain is Leucine-rich repeat-containing protein 3 (257 aa).

The signal sequence occupies residues 1 to 32 (MGPRGRQSPSSPLAPSQGSCFFILFCLRLGAS). The LRRNT domain occupies 33 to 64 (CPQSCQCPDHAGAVAVHCSSRGLQEIPRDIPA). 3 LRR repeats span residues 65 to 86 (NTVL…AFQH), 89 to 110 (QLRE…AFSG), and 114 to 135 (GLRL…ALGK). The region spanning 145 to 198 (NPLHCECALQEALWELKLDPDSVDEIACHTSAQEQFVGKPLIQVLDSGASFCST) is the LRRCT domain. Residues 205-225 (VAMLVTMFGWFTMVIAYVVYY) traverse the membrane as a helical segment.

It belongs to the LRRC3 family.

The protein localises to the membrane. This is Leucine-rich repeat-containing protein 3 (Lrrc3) from Rattus norvegicus (Rat).